We begin with the raw amino-acid sequence, 700 residues long: Calpain-2 catalytic subunit (700 aa).

The residue at position 2 (A2) is an N-acetylalanine. Residues 2–19 (AGIAMKLAKDREAAEGLG) constitute a propeptide, anchors to the small subunit. The Calpain catalytic domain occupies 45–344 (LFQDPSFPAL…YSRLEICNLT (300 aa)). The Ca(2+) site is built by I89, G91, and D96. C105 is an active-site residue. E175, Q229, and K230 together coordinate Ca(2+). Active-site residues include H262 and N286. Ca(2+) is bound by residues E292, D299, Q319, and E323. The domain III stretch occupies residues 345 to 514 (PDTLTCDSYK…KKADYQTVDD (170 aa)). The linker stretch occupies residues 515–529 (EIEANIEEIEANEED). The tract at residues 530–700 (IGDGFRRLFA…LISWLSFSVL (171 aa)) is domain IV. Residues A542, D545, E547, E552, D585, D587, S589, K591, E596, D615, D617, S619, T621, E626, D658, and N661 each contribute to the Ca(2+) site. 2 EF-hand domains span residues 572-605 (FSIE…TKIQ) and 602-637 (TKIQ…AGFK). In terms of domain architecture, EF-hand 3 spans 667–700 (VRLEILFKIFKQLDPENTGTIQLDLISWLSFSVL).

This sequence belongs to the peptidase C2 family. As to quaternary structure, forms a heterodimer with a small (regulatory) subunit (CAPNS1). Interacts with CPEB3; this leads to cleavage of CPEB3. It depends on Ca(2+) as a cofactor. As to expression, ubiquitous.

The protein localises to the cytoplasm. Its subcellular location is the cell membrane. It catalyses the reaction Broad endopeptidase specificity.. Its activity is regulated as follows. Activated by 200-1000 micromolar concentrations of calcium and inhibited by calpastatin. Its function is as follows. Calcium-regulated non-lysosomal thiol-protease which catalyze limited proteolysis of substrates involved in cytoskeletal remodeling and signal transduction. Proteolytically cleaves MYOC at 'Arg-226'. Proteolytically cleaves CPEB3 following neuronal stimulation which abolishes CPEB3 translational repressor activity, leading to translation of CPEB3 target mRNAs. The polypeptide is Calpain-2 catalytic subunit (Capn2) (Rattus norvegicus (Rat)).